The following is a 200-amino-acid chain: 3-isopropylmalate dehydratase small subunit (200 aa).

Belongs to the LeuD family. LeuD type 1 subfamily. In terms of assembly, heterodimer of LeuC and LeuD.

The catalysed reaction is (2R,3S)-3-isopropylmalate = (2S)-2-isopropylmalate. It participates in amino-acid biosynthesis; L-leucine biosynthesis; L-leucine from 3-methyl-2-oxobutanoate: step 2/4. Functionally, catalyzes the isomerization between 2-isopropylmalate and 3-isopropylmalate, via the formation of 2-isopropylmaleate. This is 3-isopropylmalate dehydratase small subunit from Campylobacter jejuni (strain RM1221).